A 351-amino-acid polypeptide reads, in one-letter code: Histidinol-phosphate aminotransferase (351 aa).

Residue Lys213 is modified to N6-(pyridoxal phosphate)lysine.

This sequence belongs to the class-II pyridoxal-phosphate-dependent aminotransferase family. Histidinol-phosphate aminotransferase subfamily. Homodimer. The cofactor is pyridoxal 5'-phosphate.

It carries out the reaction L-histidinol phosphate + 2-oxoglutarate = 3-(imidazol-4-yl)-2-oxopropyl phosphate + L-glutamate. It catalyses the reaction L-histidine + 2-oxoglutarate = 3-(imidazol-5-yl)pyruvate + L-glutamate. The protein operates within amino-acid biosynthesis; L-histidine biosynthesis; L-histidine from 5-phospho-alpha-D-ribose 1-diphosphate: step 7/9. This is Histidinol-phosphate aminotransferase from Caldanaerobacter subterraneus subsp. tengcongensis (strain DSM 15242 / JCM 11007 / NBRC 100824 / MB4) (Thermoanaerobacter tengcongensis).